Consider the following 1213-residue polypeptide: DNA-directed RNA polymerase subunit beta' (1213 aa).

4 residues coordinate Zn(2+): C60, C62, C75, and C78. Positions 450, 452, and 454 each coordinate Mg(2+). Zn(2+) is bound by residues C819, C893, C900, and C903.

The protein belongs to the RNA polymerase beta' chain family. The RNAP catalytic core consists of 2 alpha, 1 beta, 1 beta' and 1 omega subunit. When a sigma factor is associated with the core the holoenzyme is formed, which can initiate transcription. The cofactor is Mg(2+). Zn(2+) is required as a cofactor.

It carries out the reaction RNA(n) + a ribonucleoside 5'-triphosphate = RNA(n+1) + diphosphate. Functionally, DNA-dependent RNA polymerase catalyzes the transcription of DNA into RNA using the four ribonucleoside triphosphates as substrates. The chain is DNA-directed RNA polymerase subunit beta' from Streptococcus pyogenes serotype M4 (strain MGAS10750).